The chain runs to 464 residues: UDP-glycosyltransferase 76C1 (464 aa).

Residues serine 279, 338–340 (APQ), 355–363 (HNGWNSTLE), and 377–380 (KWDQ) contribute to the UDP-alpha-D-glucose site.

The protein belongs to the UDP-glycosyltransferase family.

Its activity is regulated as follows. Inhibited by olomoucine and 3-isobutyl-1-methylxanthine. Its function is as follows. Involved in the N-glucosylation of cytokinins. Catalyzes the formation of both the 7-N and the 9-N-glucosides. The chain is UDP-glycosyltransferase 76C1 (UGT76C1) from Arabidopsis thaliana (Mouse-ear cress).